The following is a 983-amino-acid chain: Protein CLASP-3 (983 aa).

Disordered regions lie at residues 356 to 393 and 666 to 690; these read YPNRPGSRTRTSSITSTDSRDTSPTRRNSPLPPETQKA and SNNIATNSGATASRETSNTSFQKES. Residues 359–372 show a composition bias toward low complexity; sequence RPGSRTRTSSITST. Residues 918-956 form an HEAT repeat; that stretch reads ITPTIIKAYQSTSSTVRKTVVYCLVAMVNRVGEQRMTPH.

This sequence belongs to the CLASP family.

Its subcellular location is the cytoplasm. The protein localises to the cytoskeleton. Functionally, microtubule plus-end tracking protein that promotes the stabilization of dynamic microtubules. This chain is Protein CLASP-3 (cls-3), found in Caenorhabditis elegans.